We begin with the raw amino-acid sequence, 158 residues long: Phospholipase A2 AP-PLA2-II (158 aa).

An N-terminal signal peptide occupies residues 1–16 (MKTFLILAMAVALAKA). The propeptide occupies 17–23 (QSTDEIT). Disulfide bonds link cysteine 51-cysteine 158, cysteine 53-cysteine 69, cysteine 68-cysteine 138, cysteine 75-cysteine 131, cysteine 85-cysteine 124, and cysteine 109-cysteine 129. Glycine 54 and glycine 56 together coordinate Ca(2+). Histidine 72 is a catalytic residue. Ca(2+) is bound at residue aspartate 73. Residue aspartate 132 is part of the active site.

It belongs to the phospholipase A2 family. Group I subfamily. As to quaternary structure, monomer. Requires Ca(2+) as cofactor. In terms of tissue distribution, expressed by the venom gland.

It localises to the secreted. It carries out the reaction a 1,2-diacyl-sn-glycero-3-phosphocholine + H2O = a 1-acyl-sn-glycero-3-phosphocholine + a fatty acid + H(+). Starfish phospholipase A2 (PLA2) that has hemorrhagic and capillary permeability-increasing activities and hence is considered to be deeply involved in the local inflammation. Shows hemolytic activity only in the presence of phosphatidylcholine (PC). PLA2 catalyzes the calcium-dependent hydrolysis of the 2-acyl groups in 3-sn-phosphoglycerides. This is Phospholipase A2 AP-PLA2-II from Acanthaster planci (Crown-of-thorns starfish).